The following is a 116-amino-acid chain: Protein Rev (116 aa).

Phosphoserine; by host CK2 occurs at positions 5 and 8. The tract at residues 18-26 (CIKILYQSN) is homomultimerization. Positions 27 to 47 (PYPKPEGTRQARRNRRRRWRA) are disordered. A Nuclear localization signal and RNA-binding (RRE) motif is present at residues 34–50 (TRQARRNRRRRWRARQR). Basic residues predominate over residues 36-47 (QARRNRRRRWRA). Residues 73-84 (LQLPPLERLHIN) carry the Nuclear export signal and binding to XPO1 motif. Residues 87–116 (EDCGQGPEEGVGSSQISGESHAVLESGTKE) form a disordered region. At Ser99 the chain carries Phosphoserine; by host.

The protein belongs to the HIV-1 REV protein family. As to quaternary structure, homomultimer; when bound to the RRE. Multimeric assembly is essential for activity and may involve XPO1. Binds to human KPNB1, XPO1, TNPO1, RANBP5 and IPO7. Interacts with the viral Integrase. Interacts with human KHDRBS1. Interacts with human NAP1; this interaction decreases Rev multimerization and stimulates its activity. Interacts with human DEAD-box helicases DDX3 and DDX24; these interactions may serve for viral RNA export to the cytoplasm and packaging, respectively. Interacts with human PSIP1; this interaction may inhibit HIV-1 DNA integration by promoting dissociation of the Integrase-LEDGF/p75 complex. Post-translationally, asymmetrically arginine dimethylated at one site by host PRMT6. Methylation impairs the RNA-binding activity and export of viral RNA from the nucleus to the cytoplasm. In terms of processing, phosphorylated by protein kinase CK2. Presence of, and maybe binding to the N-terminus of the regulatory beta subunit of CK2 is necessary for CK2-mediated Rev's phosphorylation.

It is found in the host nucleus. It localises to the host nucleolus. The protein localises to the host cytoplasm. Escorts unspliced or incompletely spliced viral pre-mRNAs (late transcripts) out of the nucleus of infected cells. These pre-mRNAs carry a recognition sequence called Rev responsive element (RRE) located in the env gene, that is not present in fully spliced viral mRNAs (early transcripts). This function is essential since most viral proteins are translated from unspliced or partially spliced pre-mRNAs which cannot exit the nucleus by the pathway used by fully processed cellular mRNAs. Rev itself is translated from a fully spliced mRNA that readily exits the nucleus. Rev's nuclear localization signal (NLS) binds directly to KPNB1/Importin beta-1 without previous binding to KPNA1/Importin alpha-1. KPNB1 binds to the GDP bound form of RAN (Ran-GDP) and targets Rev to the nucleus. In the nucleus, the conversion from Ran-GDP to Ran-GTP dissociates Rev from KPNB1 and allows Rev's binding to the RRE in viral pre-mRNAs. Rev multimerization on the RRE via cooperative assembly exposes its nuclear export signal (NES) to the surface. Rev can then form a complex with XPO1/CRM1 and Ran-GTP, leading to nuclear export of the complex. Conversion from Ran-GTP to Ran-GDP mediates dissociation of the Rev/RRE/XPO1/RAN complex, so that Rev can return to the nucleus for a subsequent round of export. Beside KPNB1, also seems to interact with TNPO1/Transportin-1, RANBP5/IPO5 and IPO7/RANBP7 for nuclear import. The nucleoporin-like HRB/RIP is an essential cofactor that probably indirectly interacts with Rev to release HIV RNAs from the perinuclear region to the cytoplasm. In Human immunodeficiency virus type 1 group M subtype F1 (isolate VI850) (HIV-1), this protein is Protein Rev.